Consider the following 373-residue polypeptide: Core trichothecene cluster (CTC) protein 14 (373 aa).

The protein belongs to the TRI14 family.

Part of the core gene cluster that mediates the biosynthesis of trichothecenes, a very large family of chemically related bicyclic sesquiterpene compounds acting as mycotoxins, including T2-toxin. The biosynthesis of trichothecenes begins with the cyclization of farnesyl diphosphate to trichodiene and is catalyzed by the trichodiene synthase TRI5. Trichodiene undergoes a series of oxygenations catalyzed by the cytochrome P450 monooxygenase TRI4. TRI4 controls the addition of four oxygens at C-2, C-3, C-11, and the C-12, C-13-epoxide to form the intermediate isotrichotriol. Isotrichotriol then undergoes a non-enzymatic isomerization and cyclization to form isotrichodermol. During this process, the oxygen at the C-2 position becomes the pyran ring oxygen and the hydroxyl group at C-11 is lost. More complex type A trichothecenes are built by modifying isotrichodermol through a series of paired hydroxylation and acetylation or acylation steps. Isotrichodermol is converted to isotrichodermin by the acetyltransferase TRI101. TRI101 encodes a C-3 transacetylase that acts as a self-protection or resistance factor during biosynthesis and that the presence of a free C-3 hydroxyl group is a key component of Fusarium trichothecene phytotoxicity. A second hydroxyl group is added to C-15 by the trichothecene C-15 hydroxylase TRI11, producing 15-decalonectrin, which is then acetylated by TRI3, producing calonectrin. A third hydroxyl group is added at C-4 by the cytochrome P450 monooxygenase TRI13, converting calonectrin to 3,15-diacetoxyspirpenol, which is subsequently acetylated bythe acetyltransferase TRI7. A fourth hydroxyl group is added to C-8 by the cytochrome P450 monooxygenase TRI1, followed by the addition of an isovaleryl moiety by TRI16. Finally, the acetyl group is removed from the C-3 position by the trichothecene C-3 esterase TRI8 to produce T-2 toxin. The chain is Core trichothecene cluster (CTC) protein 14 from Fusarium sporotrichioides.